Reading from the N-terminus, the 452-residue chain is Lipase member H (452 aa).

Residues 1–16 (MLRFYLFISLLCLVRS) form the signal peptide. N-linked (GlcNAc...) asparagine glycans are attached at residues N50, N66, and N122. The active-site Nucleophile is S154. D178 (charge relay system) is an active-site residue. The cysteines at positions 233 and 247 are disulfide-linked. H249 acts as the Charge relay system in catalysis. An N-linked (GlcNAc...) asparagine glycan is attached at N263. 3 disulfides stabilise this stretch: C271–C282, C285–C293, and C428–C447.

This sequence belongs to the AB hydrolase superfamily. Lipase family. Interacts with TTMP/C3orf52. Expressed in liver and lacrimal gland.

Its subcellular location is the secreted. The protein localises to the cell membrane. It catalyses the reaction 1-hexadecanoyl-2-(9Z-octadecenoyl)-sn-glycero-3-phosphate + H2O = 2-(9Z-octadecenoyl)-sn-glycero-3-phosphate + hexadecanoate + H(+). In terms of biological role, hydrolyzes specifically phosphatidic acid (PA) to produce 2-acyl lysophosphatidic acid (LPA; a potent bioactive lipid mediator) and fatty acid. Does not hydrolyze other phospholipids, like phosphatidylserine (PS), phosphatidylcholine (PC) and phosphatidylethanolamine (PE) or triacylglycerol (TG). This is Lipase member H (LIPH) from Oryctolagus cuniculus (Rabbit).